We begin with the raw amino-acid sequence, 428 residues long: Septin homolog spn7 (428 aa).

A Septin-type G domain is found at 15-290 (KGKKLRIMVA…ENYRTEKLSN (276 aa)). Residues 25–32 (GSSYTSYQ) form a G1 motif region. GTP is bound by residues 25–32 (GSSYTSYQ), Gly86, 166–174 (NSNAFTEEE), and Gly224. The interval 83 to 86 (EVNG) is G3 motif. The segment at 165–168 (GNSN) is G4 motif. Disordered regions lie at residues 287-345 (KLSN…SEEL) and 387-414 (KEFP…KKMD). Residues 290–307 (NDSPSNTSLSLQKQNSIV) are compositionally biased toward polar residues. The segment covering 309–325 (NEDKRSVNGSERTETRS) has biased composition (basic and acidic residues). Composition is skewed to polar residues over residues 326-339 (SIDQ…VSDS) and 392-405 (RTTS…NNTT).

This sequence belongs to the TRAFAC class TrmE-Era-EngA-EngB-Septin-like GTPase superfamily. Septin GTPase family. As to quaternary structure, component of the sporulation-specific septin complex composed of at least spn2, spn5, spn6 and spn7.

It is found in the cytoplasm. The protein resides in the nucleus. It localises to the forespore membrane. Its function is as follows. Septin-like protein involved in the correct orientation of forespore membrane extension during sporulation. Binds phosphatidylinositol 4-phosphate. In Schizosaccharomyces pombe (strain 972 / ATCC 24843) (Fission yeast), this protein is Septin homolog spn7 (spn7).